Consider the following 334-residue polypeptide: HTH-type transcriptional repressor PurR (334 aa).

The HTH lacI-type domain occupies 2–56 (ATIKDVARMAGVSTTTVSHVINKTRFVAEATQKKVLAAVDDLNYAPSAVARSLKC). The segment at residues 4-23 (IKDVARMAGVSTTTVSHVIN) is a DNA-binding region (H-T-H motif). The DNA-binding element occupies 48-56 (SAVARSLKC). Hypoxanthine-binding residues include Phe-73, Lys-189, Thr-191, Phe-220, and Asp-274.

Homodimer.

Its pathway is purine metabolism; purine nucleotide biosynthesis [regulation]. Functionally, is the main repressor of the genes involved in the de novo synthesis of purine nucleotides, regulating purB, purC, purEK, purF, purHD, purL, purMN and guaBA expression. PurR is allosterically activated to bind its cognate DNA by binding the purine corepressors, hypoxanthine or guanine, thereby effecting transcription repression. The polypeptide is HTH-type transcriptional repressor PurR (Photobacterium profundum (strain SS9)).